The primary structure comprises 195 residues: uncharacterized protein (195 aa).

The N-terminal stretch at 1–17 (MKASLITAFVLPLLALA) is a signal peptide. The N-linked (GlcNAc...) asparagine glycan is linked to Asn75.

It localises to the secreted. This is an uncharacterized protein from Arthroderma benhamiae (strain ATCC MYA-4681 / CBS 112371) (Trichophyton mentagrophytes).